Reading from the N-terminus, the 198-residue chain is Peptide deformylase (198 aa).

Fe cation is bound by residues C123 and H167. E168 is a catalytic residue. H171 contributes to the Fe cation binding site.

Belongs to the polypeptide deformylase family. Fe(2+) is required as a cofactor.

It carries out the reaction N-terminal N-formyl-L-methionyl-[peptide] + H2O = N-terminal L-methionyl-[peptide] + formate. Functionally, removes the formyl group from the N-terminal Met of newly synthesized proteins. Requires at least a dipeptide for an efficient rate of reaction. N-terminal L-methionine is a prerequisite for activity but the enzyme has broad specificity at other positions. In Ureaplasma parvum serovar 3 (strain ATCC 27815 / 27 / NCTC 11736), this protein is Peptide deformylase.